A 146-amino-acid chain; its full sequence is Flagellar assembly factor FliW (146 aa).

This sequence belongs to the FliW family. In terms of assembly, interacts with translational regulator CsrA and flagellin(s).

Its subcellular location is the cytoplasm. Acts as an anti-CsrA protein, binds CsrA and prevents it from repressing translation of its target genes, one of which is flagellin. Binds to flagellin and participates in the assembly of the flagellum. The chain is Flagellar assembly factor FliW from Shouchella clausii (strain KSM-K16) (Alkalihalobacillus clausii).